The primary structure comprises 199 residues: Probable septum site-determining protein MinC (199 aa).

Belongs to the MinC family. In terms of assembly, interacts with MinD and FtsZ.

Cell division inhibitor that blocks the formation of polar Z ring septums. Rapidly oscillates between the poles of the cell to destabilize FtsZ filaments that have formed before they mature into polar Z rings. Prevents FtsZ polymerization. This chain is Probable septum site-determining protein MinC, found in Persephonella marina (strain DSM 14350 / EX-H1).